The primary structure comprises 273 residues: Undecaprenyl-diphosphatase (273 aa).

Transmembrane regions (helical) follow at residues 6–26 (SLLIAAILGVVEGLTEFLPVS), 45–65 (AKTFEVVIQLGSILAVVVMFW), 90–110 (LTLIHILLGMIPAVVLGLLFH), 116–136 (LFNPINVMYALVVGGLLLIAA), 190–210 (YAASEFSFLLAVPMMMGATAL), 222–242 (GDISMFAVGFITAFVVALIAI), and 252–272 (ISFIPFAIYRFIVAAAVYVVF).

Belongs to the UppP family.

The protein resides in the cell inner membrane. It carries out the reaction di-trans,octa-cis-undecaprenyl diphosphate + H2O = di-trans,octa-cis-undecaprenyl phosphate + phosphate + H(+). Functionally, catalyzes the dephosphorylation of undecaprenyl diphosphate (UPP). Confers resistance to bacitracin. This chain is Undecaprenyl-diphosphatase, found in Shigella sonnei (strain Ss046).